The sequence spans 283 residues: MKQYLDLCRRIVSEGEWVANERTGKHCLTVINADLEYDVANNQFPLITTRKSYWKAAIAEFLGYIRGYDNAADFRALGTKTWDANANVNAAWLANPHRRGVDDMGRVYGVQGRAWRKPNGETIDQLRKIVNNLTKGIDDRGEILTFFNPGEFDLGCLRPCMHTHTFSLVGDTLHLTSYQRSCDVPLGLNFNQIQVFTFLALMAQITGKKAGKAYHKIVNAHIYEDQLELMRDVQLKREPFPLPKLEINPDIKTLEDLETWVTMDDFKVVGYQSHEPIKYPFSV.

DUMP is bound at residue arginine 22. The active-site Nucleophile is cysteine 160. DUMP is bound by residues 180–183 (RSCD), asparagine 191, and 221–223 (HIY). Residue aspartate 183 participates in (6R)-5,10-methylene-5,6,7,8-tetrahydrofolate binding. Serine 282 provides a ligand contact to (6R)-5,10-methylene-5,6,7,8-tetrahydrofolate.

It belongs to the thymidylate synthase family. Bacterial-type ThyA subfamily. Homodimer.

It localises to the cytoplasm. It carries out the reaction dUMP + (6R)-5,10-methylene-5,6,7,8-tetrahydrofolate = 7,8-dihydrofolate + dTMP. It functions in the pathway pyrimidine metabolism; dTTP biosynthesis. Catalyzes the reductive methylation of 2'-deoxyuridine-5'-monophosphate (dUMP) to 2'-deoxythymidine-5'-monophosphate (dTMP) while utilizing 5,10-methylenetetrahydrofolate (mTHF) as the methyl donor and reductant in the reaction, yielding dihydrofolate (DHF) as a by-product. This enzymatic reaction provides an intracellular de novo source of dTMP, an essential precursor for DNA biosynthesis. This Haemophilus influenzae (strain 86-028NP) protein is Thymidylate synthase.